The following is a 321-amino-acid chain: MARHKIALIGSGMIGGTLAHLVGLKELGDVVLFDIAEGIPQGKGLDIAESAPVEGFDAKFLGTNDYAAIEGADVCIVTAGVPRKPGMSRDDLLGINLKVMEQVGAGIKKYAPNAFVICITNPLDAMVWALQKFSGLPKSHVVGMAGVLDSARFRYFLAEEFKVSVEDVTGFVLGGHGDSMVPLIRYSTVAGIPIPDLVKMGWTTQEKIDQIVQRTRDGGAEIVGLLKSGSAFYAPASSAIAMAEAYLKDKKRVLPCAAHVSGQYGVKDLYVGVPTVIGAGGVERIIEIDLNKTEQKMFENSVASVEGLCKACGDIAPSLKN.

Residues 10 to 15 (GSGMIG) and Asp34 contribute to the NAD(+) site. Arg83 and Arg89 together coordinate substrate. Residues Asn96 and 119 to 121 (ITN) each bind NAD(+). Substrate-binding residues include Asn121 and Arg152. Catalysis depends on His176, which acts as the Proton acceptor.

Belongs to the LDH/MDH superfamily. MDH type 3 family.

It catalyses the reaction (S)-malate + NAD(+) = oxaloacetate + NADH + H(+). In terms of biological role, catalyzes the reversible oxidation of malate to oxaloacetate. In Chelativorans sp. (strain BNC1), this protein is Malate dehydrogenase.